Consider the following 729-residue polypeptide: Fatty acid oxidation complex subunit alpha (729 aa).

Positions 1-189 (MLYKGDTLYL…KIGLVDGVVK (189 aa)) are enoyl-CoA hydratase/isomerase. Residue Asp-296 participates in substrate binding. Residues 311 to 729 (ETPKQAAVLG…ARPVGSLKTA (419 aa)) form a 3-hydroxyacyl-CoA dehydrogenase region. Residues Met-324, Asp-343, 400 to 402 (VVE), Lys-407, and Ser-429 each bind NAD(+). Residue His-450 is the For 3-hydroxyacyl-CoA dehydrogenase activity of the active site. Asn-453 provides a ligand contact to NAD(+). Asn-500 and Tyr-660 together coordinate substrate. Positions 708 to 729 (RHNEPYYPPVEPARPVGSLKTA) are disordered.

The protein in the N-terminal section; belongs to the enoyl-CoA hydratase/isomerase family. This sequence in the C-terminal section; belongs to the 3-hydroxyacyl-CoA dehydrogenase family. Heterotetramer of two alpha chains (FadB) and two beta chains (FadA).

It carries out the reaction a (3S)-3-hydroxyacyl-CoA + NAD(+) = a 3-oxoacyl-CoA + NADH + H(+). It catalyses the reaction a (3S)-3-hydroxyacyl-CoA = a (2E)-enoyl-CoA + H2O. The catalysed reaction is a 4-saturated-(3S)-3-hydroxyacyl-CoA = a (3E)-enoyl-CoA + H2O. The enzyme catalyses (3S)-3-hydroxybutanoyl-CoA = (3R)-3-hydroxybutanoyl-CoA. It carries out the reaction a (3Z)-enoyl-CoA = a 4-saturated (2E)-enoyl-CoA. It catalyses the reaction a (3E)-enoyl-CoA = a 4-saturated (2E)-enoyl-CoA. Its pathway is lipid metabolism; fatty acid beta-oxidation. Functionally, involved in the aerobic and anaerobic degradation of long-chain fatty acids via beta-oxidation cycle. Catalyzes the formation of 3-oxoacyl-CoA from enoyl-CoA via L-3-hydroxyacyl-CoA. It can also use D-3-hydroxyacyl-CoA and cis-3-enoyl-CoA as substrate. The protein is Fatty acid oxidation complex subunit alpha of Salmonella choleraesuis (strain SC-B67).